The sequence spans 359 residues: Sulfate/thiosulfate import ATP-binding protein CysA (359 aa).

Residues V3 to I237 enclose the ABC transporter domain. G35–T42 lines the ATP pocket.

It belongs to the ABC transporter superfamily. Sulfate/tungstate importer (TC 3.A.1.6) family. The complex is composed of two ATP-binding proteins (CysA), two transmembrane proteins (CysT and CysW) and a solute-binding protein (CysP).

The protein resides in the cell inner membrane. The enzyme catalyses sulfate(out) + ATP + H2O = sulfate(in) + ADP + phosphate + H(+). It carries out the reaction thiosulfate(out) + ATP + H2O = thiosulfate(in) + ADP + phosphate + H(+). In terms of biological role, part of the ABC transporter complex CysAWTP involved in sulfate/thiosulfate import. Responsible for energy coupling to the transport system. The sequence is that of Sulfate/thiosulfate import ATP-binding protein CysA from Brucella melitensis biotype 1 (strain ATCC 23456 / CCUG 17765 / NCTC 10094 / 16M).